The chain runs to 909 residues: Protein translocase subunit SecA (909 aa).

Residues glutamine 87 and 105–109 each bind ATP; that span reads GEGKT. A disordered region spans residues 246–265; it reads LEQQEKEDEEGKNGDGDYTI. Positions 254 to 265 are enriched in basic and acidic residues; the sequence is EEGKNGDGDYTI. Position 512 (aspartate 512) interacts with ATP. Positions 834–858 are enriched in basic and acidic residues; the sequence is ESDVEAVEEQRRQADEQPKQYEHET. Positions 834 to 899 are disordered; sequence ESDVEAVEEQ…NDPCPCGSGL (66 aa). Residues 859–875 are compositionally biased toward low complexity; it reads ASATQAPEQAPEAAPAA. Zn(2+) is bound by residues cysteine 893, cysteine 895, cysteine 904, and histidine 905.

It belongs to the SecA family. As to quaternary structure, monomer and homodimer. Part of the essential Sec protein translocation apparatus which comprises SecA, SecYEG and auxiliary proteins SecDF-YajC and YidC. The cofactor is Zn(2+).

The protein resides in the cell inner membrane. It is found in the cytoplasm. The enzyme catalyses ATP + H2O + cellular proteinSide 1 = ADP + phosphate + cellular proteinSide 2.. In terms of biological role, part of the Sec protein translocase complex. Interacts with the SecYEG preprotein conducting channel. Has a central role in coupling the hydrolysis of ATP to the transfer of proteins into and across the cell membrane, serving both as a receptor for the preprotein-SecB complex and as an ATP-driven molecular motor driving the stepwise translocation of polypeptide chains across the membrane. This Pseudoalteromonas atlantica (strain T6c / ATCC BAA-1087) protein is Protein translocase subunit SecA.